Here is a 213-residue protein sequence, read N- to C-terminus: 3-oxoadipate CoA-transferase subunit B (213 aa).

Glutamate 50 is an active-site residue.

The protein belongs to the 3-oxoacid CoA-transferase subunit B family. As to quaternary structure, heterodimer.

The catalysed reaction is 3-oxoadipate + succinyl-CoA = 3-oxoadipyl-CoA + succinate. It participates in aromatic compound metabolism; beta-ketoadipate pathway; acetyl-CoA and succinyl-CoA from 3-oxoadipate: step 1/2. This is 3-oxoadipate CoA-transferase subunit B (pcaJ) from Pseudomonas putida (strain ATCC 47054 / DSM 6125 / CFBP 8728 / NCIMB 11950 / KT2440).